Consider the following 292-residue polypeptide: ATP synthase gamma chain (292 aa).

Belongs to the ATPase gamma chain family. F-type ATPases have 2 components, CF(1) - the catalytic core - and CF(0) - the membrane proton channel. CF(1) has five subunits: alpha(3), beta(3), gamma(1), delta(1), epsilon(1). CF(0) has three main subunits: a, b and c.

It localises to the cell inner membrane. In terms of biological role, produces ATP from ADP in the presence of a proton gradient across the membrane. The gamma chain is believed to be important in regulating ATPase activity and the flow of protons through the CF(0) complex. This Nautilia profundicola (strain ATCC BAA-1463 / DSM 18972 / AmH) protein is ATP synthase gamma chain.